We begin with the raw amino-acid sequence, 860 residues long: Transcription factor E2F8 (860 aa).

Disordered stretches follow at residues 1-27 and 38-57; these read MENQ…PSSK and DLGP…GEPW. Residues Ser-71 and Ser-102 each carry the phosphoserine modification. 2 consecutive DNA-binding regions follow at residues 113–182 and 261–347; these read RKEK…TWHG and RKDK…KWTG. Disordered regions lie at residues 407–433, 532–616, and 745–803; these read RRKI…PPVP, LTPP…PKED, and QMSA…QPVP. Phosphoserine occurs at positions 412 and 416. Composition is skewed to polar residues over residues 412-429 and 542-554; these read SAPS…SQNS and VCPT…TGSK. A compositionally biased stretch (basic and acidic residues) spans 555-565; that stretch reads DPTDAPAEKTA.

This sequence belongs to the E2F/DP family. As to quaternary structure, interacts with HIF1A. Homodimer and heterodimer: mainly forms homodimers and, to a lesser extent, heterodimers with E2F8. Dimerization is important for DNA-binding. As to expression, highly expressed in liver, skin, thymus and testis. Expressed in trophoblast giant cells throughout placenta development (at protein level).

Its subcellular location is the nucleus. In terms of biological role, atypical E2F transcription factor that participates in various processes such as angiogenesis and polyploidization of specialized cells. Mainly acts as a transcription repressor that binds DNA independently of DP proteins and specifically recognizes the E2 recognition site 5'-TTTC[CG]CGC-3'. Directly represses transcription of classical E2F transcription factors such as E2F1: component of a feedback loop in S phase by repressing the expression of E2F1, thereby preventing p53/TP53-dependent apoptosis. Plays a key role in polyploidization of cells in placenta and liver by regulating the endocycle, probably by repressing genes promoting cytokinesis and antagonizing action of classical E2F proteins (E2F1, E2F2 and/or E2F3). Required for placental development by promoting polyploidization of trophoblast giant cells. Acts as a promoter of sprouting angiogenesis, possibly by acting as a transcription activator: associates with HIF1A, recognizes and binds the VEGFA promoter, which is different from canonical E2 recognition site, and activates expression of the VEGFA gene. This is Transcription factor E2F8 (E2f8) from Mus musculus (Mouse).